The sequence spans 124 residues: Large ribosomal subunit protein bL19 (124 aa).

It belongs to the bacterial ribosomal protein bL19 family.

Functionally, this protein is located at the 30S-50S ribosomal subunit interface and may play a role in the structure and function of the aminoacyl-tRNA binding site. The chain is Large ribosomal subunit protein bL19 from Zymomonas mobilis subsp. mobilis (strain ATCC 31821 / ZM4 / CP4).